Here is a 134-residue protein sequence, read N- to C-terminus: Profilin (134 aa).

This sequence belongs to the profilin family. Interacts with host Tpm1. Interacts with protein A25.

The protein resides in the host cytoplasm. In terms of biological role, participates in either intracellular transport of viral proteins or intercellular spread of the virus. Cellular profilins modulate actin filament dynamics (polymerization and depolymerization) via direct binding to actin through an actin-binding domain as well as by modulation of other actin-binding proteins. In contrast to cellular homologs, the poxvirus profilins seem to bind actin only weakly. This Ectromelia virus (strain Moscow) (ECTV) protein is Profilin.